The following is a 295-amino-acid chain: 4-hydroxy-tetrahydrodipicolinate synthase (295 aa).

Thr-46 is a pyruvate binding site. The active-site Proton donor/acceptor is Tyr-135. The Schiff-base intermediate with substrate role is filled by Lys-164. Residue Ile-205 coordinates pyruvate.

The protein belongs to the DapA family. Homotetramer; dimer of dimers.

It localises to the cytoplasm. The enzyme catalyses L-aspartate 4-semialdehyde + pyruvate = (2S,4S)-4-hydroxy-2,3,4,5-tetrahydrodipicolinate + H2O + H(+). The protein operates within amino-acid biosynthesis; L-lysine biosynthesis via DAP pathway; (S)-tetrahydrodipicolinate from L-aspartate: step 3/4. In terms of biological role, catalyzes the condensation of (S)-aspartate-beta-semialdehyde [(S)-ASA] and pyruvate to 4-hydroxy-tetrahydrodipicolinate (HTPA). In Wolinella succinogenes (strain ATCC 29543 / DSM 1740 / CCUG 13145 / JCM 31913 / LMG 7466 / NCTC 11488 / FDC 602W) (Vibrio succinogenes), this protein is 4-hydroxy-tetrahydrodipicolinate synthase.